The chain runs to 132 residues: Secreted RxLR effector protein RXLR-C22 (132 aa).

Positions 1-21 are cleaved as a signal peptide; the sequence is MRSLVWAVIATLIVLTPFSEA. The short motif at 56–74 is the RxLR-dEER element; it reads RKLQSDSVKKGDSTGLEER. N116 carries N-linked (GlcNAc...) asparagine glycosylation.

Belongs to the RxLR effector family.

Its subcellular location is the secreted. It localises to the host Golgi apparatus. In terms of biological role, secreted effector that does not suppress pattern-triggered immunity (PTI) in plant host. The chain is Secreted RxLR effector protein RXLR-C22 from Plasmopara halstedii (Downy mildew of sunflower).